Reading from the N-terminus, the 409-residue chain is Ribose-phosphate pyrophosphokinase 3, chloroplastic (409 aa).

2 stretches are compositionally biased toward low complexity: residues 1–16 (MATA…PAAA) and 34–43 (PASAFARPSP). Residues 1–43 (MATAASASASASPAAAFGAKTRRPGPSPSPSPSPASAFARPSP) are disordered. Residues 1 to 44 (MATAASASASASPAAAFGAKTRRPGPSPSPSPSPASAFARPSPR) constitute a chloroplast transit peptide. Mg(2+) is bound by residues Asp229 and His231. Residues 312 to 327 (GRHVVIVDDLVQSGGT) are binding of phosphoribosylpyrophosphate.

It belongs to the ribose-phosphate pyrophosphokinase family. The cofactor is Mg(2+).

Its subcellular location is the plastid. It localises to the chloroplast. The enzyme catalyses D-ribose 5-phosphate + ATP = 5-phospho-alpha-D-ribose 1-diphosphate + AMP + H(+). This chain is Ribose-phosphate pyrophosphokinase 3, chloroplastic, found in Oryza sativa subsp. japonica (Rice).